We begin with the raw amino-acid sequence, 406 residues long: Dual-specificity RNA methyltransferase RlmN (406 aa).

Glutamate 119 serves as the catalytic Proton acceptor. In terms of domain architecture, Radical SAM core spans 125-370; the sequence is DKGRGTLCVS…AMVRRTRGDD (246 aa). A disulfide bond links cysteine 132 and cysteine 375. The [4Fe-4S] cluster site is built by cysteine 139, cysteine 143, and cysteine 146. S-adenosyl-L-methionine contacts are provided by residues 192 to 193, serine 224, 246 to 248, and asparagine 332; these read GE and SLH. The active-site S-methylcysteine intermediate is the cysteine 375.

It belongs to the radical SAM superfamily. RlmN family. Requires [4Fe-4S] cluster as cofactor.

It is found in the cytoplasm. It carries out the reaction adenosine(2503) in 23S rRNA + 2 reduced [2Fe-2S]-[ferredoxin] + 2 S-adenosyl-L-methionine = 2-methyladenosine(2503) in 23S rRNA + 5'-deoxyadenosine + L-methionine + 2 oxidized [2Fe-2S]-[ferredoxin] + S-adenosyl-L-homocysteine. It catalyses the reaction adenosine(37) in tRNA + 2 reduced [2Fe-2S]-[ferredoxin] + 2 S-adenosyl-L-methionine = 2-methyladenosine(37) in tRNA + 5'-deoxyadenosine + L-methionine + 2 oxidized [2Fe-2S]-[ferredoxin] + S-adenosyl-L-homocysteine. In terms of biological role, specifically methylates position 2 of adenine 2503 in 23S rRNA and position 2 of adenine 37 in tRNAs. m2A2503 modification seems to play a crucial role in the proofreading step occurring at the peptidyl transferase center and thus would serve to optimize ribosomal fidelity. The protein is Dual-specificity RNA methyltransferase RlmN of Xylella fastidiosa (strain Temecula1 / ATCC 700964).